A 102-amino-acid chain; its full sequence is Integration host factor subunit beta (102 aa).

The interval 54–102 (HHRPARMGRNPKTGEPVALPAKYVPHFKPGKELRERVNSSRHQAPLRSQ) is disordered. Basic and acidic residues predominate over residues 82-91 (PGKELRERVN). Residues 93–102 (SRHQAPLRSQ) are compositionally biased toward polar residues.

It belongs to the bacterial histone-like protein family. In terms of assembly, heterodimer of an alpha and a beta chain.

Its function is as follows. This protein is one of the two subunits of integration host factor, a specific DNA-binding protein that functions in genetic recombination as well as in transcriptional and translational control. This is Integration host factor subunit beta from Halorhodospira halophila (strain DSM 244 / SL1) (Ectothiorhodospira halophila (strain DSM 244 / SL1)).